A 130-amino-acid chain; its full sequence is Small ribosomal subunit protein uS8 (130 aa).

This sequence belongs to the universal ribosomal protein uS8 family. As to quaternary structure, part of the 30S ribosomal subunit. Contacts proteins S5 and S12.

Its function is as follows. One of the primary rRNA binding proteins, it binds directly to 16S rRNA central domain where it helps coordinate assembly of the platform of the 30S subunit. This chain is Small ribosomal subunit protein uS8, found in Ruegeria sp. (strain TM1040) (Silicibacter sp.).